The following is a 487-amino-acid chain: uncharacterized protein (487 aa).

3 helical membrane passes run 10 to 30 (AALMGALAVVLITAAPVAADA), 45 to 65 (VISPVAIPCVALGKFADAVAA), and 439 to 459 (APVVFAGAALACTAIGADFTL).

Its subcellular location is the cell membrane. This is an uncharacterized protein from Mycobacterium tuberculosis (strain CDC 1551 / Oshkosh).